The primary structure comprises 292 residues: GTP cyclohydrolase FolE2 (292 aa).

Belongs to the GTP cyclohydrolase IV family.

It carries out the reaction GTP + H2O = 7,8-dihydroneopterin 3'-triphosphate + formate + H(+). It participates in cofactor biosynthesis; 7,8-dihydroneopterin triphosphate biosynthesis; 7,8-dihydroneopterin triphosphate from GTP: step 1/1. In terms of biological role, converts GTP to 7,8-dihydroneopterin triphosphate. The chain is GTP cyclohydrolase FolE2 from Staphylococcus aureus (strain Mu50 / ATCC 700699).